The primary structure comprises 2104 residues: Protein Ycf2 (2104 aa).

Residue 1396–1403 (GPVETGRS) participates in ATP binding.

This sequence belongs to the Ycf2 family.

The protein localises to the plastid. Its subcellular location is the chloroplast stroma. Functionally, probable ATPase of unknown function. Its presence in a non-photosynthetic plant (Epifagus virginiana) and experiments in tobacco indicate that it has an essential function which is probably not related to photosynthesis. This is Protein Ycf2 (ycf2-A) from Adiantum capillus-veneris (Maidenhair fern).